Reading from the N-terminus, the 489-residue chain is L-asparagine permease 1 (489 aa).

The next 12 membrane-spanning stretches (helical) occupy residues 25-45, 49-69, 100-120, 137-157, 162-182, 210-230, 255-275, 289-309, 344-364, 369-389, 413-433, and 439-459; these read QLQM…GASG, KAGP…FLIL, AVGW…TTAI, ILAL…VEWF, FWAA…GTVF, WLPL…VELV, IAIF…YTAY, IGFH…ALSS, YGGI…NAFK, FEIV…TIVL, SPYS…TMAS, and TWTV…WYLV.

Belongs to the amino acid-polyamine-organocation (APC) superfamily. Amino acid transporter (AAT) (TC 2.A.3.1) family.

The protein resides in the cell membrane. This Mycobacterium bovis (strain ATCC BAA-935 / AF2122/97) protein is L-asparagine permease 1 (ansP1).